We begin with the raw amino-acid sequence, 311 residues long: tRNA dimethylallyltransferase (311 aa).

12–19 (GPTASGKT) is a binding site for ATP. 14–19 (TASGKT) is a binding site for substrate. Interaction with substrate tRNA regions lie at residues 37–40 (DSAL), 161–165 (QRINR), and 241–246 (RCVGYR).

Belongs to the IPP transferase family. In terms of assembly, monomer. Requires Mg(2+) as cofactor.

It carries out the reaction adenosine(37) in tRNA + dimethylallyl diphosphate = N(6)-dimethylallyladenosine(37) in tRNA + diphosphate. In terms of biological role, catalyzes the transfer of a dimethylallyl group onto the adenine at position 37 in tRNAs that read codons beginning with uridine, leading to the formation of N6-(dimethylallyl)adenosine (i(6)A). The sequence is that of tRNA dimethylallyltransferase from Histophilus somni (strain 2336) (Haemophilus somnus).